The following is a 318-amino-acid chain: DNA polymerase IV (318 aa).

Residues 6–186 (IIHIDMDAFY…LPLGKIPGVG (181 aa)) enclose the UmuC domain. Residues aspartate 10 and aspartate 104 each coordinate Mg(2+). The active site involves glutamate 105.

This sequence belongs to the DNA polymerase type-Y family. In terms of assembly, monomer. Mg(2+) serves as cofactor.

The protein localises to the cytoplasm. The enzyme catalyses DNA(n) + a 2'-deoxyribonucleoside 5'-triphosphate = DNA(n+1) + diphosphate. In terms of biological role, poorly processive, error-prone DNA polymerase involved in untargeted mutagenesis. Copies undamaged DNA at stalled replication forks, which arise in vivo from mismatched or misaligned primer ends. These misaligned primers can be extended by PolIV. Exhibits no 3'-5' exonuclease (proofreading) activity. May be involved in translesional synthesis, in conjunction with the beta clamp from PolIII. The chain is DNA polymerase IV from Neisseria meningitidis serogroup B (strain ATCC BAA-335 / MC58).